We begin with the raw amino-acid sequence, 62 residues long: Conotoxin Sr5.7 (62 aa).

An N-terminal signal peptide occupies residues Met-1 to Ala-22. Residues Gln-23–His-44 constitute a propeptide that is removed on maturation.

The protein belongs to the conotoxin T superfamily. In terms of processing, contains 2 disulfide bonds that can be either 'C1-C3, C2-C4' or 'C1-C4, C2-C3', since these disulfide connectivities have been observed for conotoxins with cysteine framework V (for examples, see AC P0DQQ7 and AC P81755). As to expression, expressed by the venom duct.

It localises to the secreted. This is Conotoxin Sr5.7 from Conus spurius (Alphabet cone).